The sequence spans 776 residues: MARGVAGVLRRAYSSRVTVLFSTRNLHSFRESESRSLCNSDFDVPTNRFCSGNRVRIQFPWNDYRFGCFEIGKVRSFSSTVDNNGENDDIEESVGSESDDYDEEGLINELSDVDEGLLNDSVVAETDEIGSEAARALNDRYHDPVELYRELRGSEVRSKLQHSEWDSLHEIFGFFAQSGWAANQALAIYIGKSFFPTAVSKFRDFFIEKCGIEVVQDLVRVGPTDVAVKFLFPVFVEFCIEEFPDEIKRFKSIVDTADLTKPATWFPFARAMKRKIVYHCGPTNSGKTYNALQRFMEAKNGLYCSPLRLLAMEVFDKVNALGIYCSLLTGQEKKYVPFANHVSCTVEMVSTDELYEVAVLDEIQMMADPSRGHAWTKALLGLKADEIHLCGDPSVLDIVRKMCADTGDELVEEHYERFKPLVVEAKTLLGELKNVKSGDCVVAFSRREIFEVKMAIEKHTNHRCCVIYGALPPETRRQQAKLFNDQENEYDVLVASDAVGMGLNLNIRRVVFYSLNKYNGDKIVPVAASQVKQIAGRAGRRGSRYPDGLTTTLHLEDLNYLIECLQQPFDEVTKVGLFPFFEQIELFAAQVPDMAFSNLLEHFGKHCRLDGSYFLCRHDHVKKVANMLEKVEGLSLEDRFNFCFAPVNIRNPRAMHNLYRFASSYSQNMPVNVAMGIPKSSAKSDAQLLDLESRHQILSMYLWLSNQFEENFPFVEKVEAMATNIAELLGESLSKASWKMESKEEKVKGQMKEDRGYERPASLIKLVKKRKDEKLV.

The N-terminal 84 residues, 1–84 (MARGVAGVLR…RSFSSTVDNN (84 aa)), are a transit peptide targeting the mitochondrion. A disordered region spans residues 80–101 (TVDNNGENDDIEESVGSESDDY). The span at 85-101 (GENDDIEESVGSESDDY) shows a compositional bias: acidic residues. A Helicase ATP-binding domain is found at 268-426 (FARAMKRKIV…RFKPLVVEAK (159 aa)). 281–288 (GPTNSGKT) contributes to the ATP binding site. Residues 361–364 (DEIQ) carry the DEIH box; degenerate motif. In terms of domain architecture, Helicase C-terminal spans 427-595 (TLLGELKNVK…LFAAQVPDMA (169 aa)).

The protein belongs to the DExH box helicase family. In terms of assembly, homodimer; in free form. Component of the mitochondrial degradosome (mtEXO) complex which is a heteropentamer containing 2 copies of SUPV3L1 and 3 copies of PNPT1. Mg(2+) serves as cofactor. The cofactor is Mn(2+).

Its subcellular location is the nucleus. It localises to the mitochondrion matrix. The protein resides in the mitochondrion nucleoid. The catalysed reaction is ATP + H2O = ADP + phosphate + H(+). Its function is as follows. Major helicase player in mitochondrial RNA metabolism. Component of the mitochondrial degradosome (mtEXO) complex, that degrades 3' overhang double-stranded RNA with a 3'-to-5' directionality in an ATP-dependent manner. ATPase and ATP-dependent multisubstrate helicase, able to unwind double-stranded (ds) DNA and RNA, and RNA/DNA heteroduplexes in the 5'-to-3' direction. Plays a role in the RNA surveillance system in mitochondria; regulates the stability of mature mRNAs, the removal of aberrantly formed mRNAs and the rapid degradation of non coding processing intermediates. This Arabidopsis thaliana (Mouse-ear cress) protein is DExH-box ATP-dependent RNA helicase DExH18, mitochondrial.